The sequence spans 546 residues: Acyl-CoA ligase oryP (546 aa).

Residues 166–174 (TSGTTGAPK), 300–305 (QFWLNL), and R403 contribute to the ATP site. Residues 412–414 (WDH) and 482–484 (LLR) each bind CoA. K499 contacts ATP.

This sequence belongs to the ATP-dependent AMP-binding enzyme family.

It functions in the pathway secondary metabolite biosynthesis. Its function is as follows. Acyl-CoA ligase; part of the gene cluster that mediates the biosynthesis of oryzines, natural products with an unusual maleidride backbone. The two subunits of the fungal fatty acid synthase oryfasA and oryfasB probably form octenoic acid. This fatty acid is most likely activated by the acyl-CoA ligase oryP to give octenyl-CoA before the citrate synthase-like protein oryE catalyzes condensation with oxaloacetate to form tricarboxylic acid. The next steps of the pathways are conjectural, but a favorite possible route has been proposed, beginning with decarboxylation and concomitant dehydration by the decarboxylase oryM, followed by tautomerization, which may lead to the production of a diene intermediate. Reduction of this diene intermediate could give the known metabolite piliformic acid. On the pathway to oryzine B and oryzine A, however, hydroxylation of the diene by the alpha-ketoglutarate-dependent dioxygenase oryG and lactonisation by the lactonohydrolases oryH or oryL could give oryzine B directly. Finally, enoyl reduction by the dehydrogenase oryD would then convert oryzine B into oryzine A. This Aspergillus oryzae (strain ATCC 42149 / RIB 40) (Yellow koji mold) protein is Acyl-CoA ligase oryP.